Here is a 223-residue protein sequence, read N- to C-terminus: Uracil-DNA glycosylase (223 aa).

The active-site Proton acceptor is D67.

This sequence belongs to the uracil-DNA glycosylase (UDG) superfamily. UNG family.

It is found in the cytoplasm. The enzyme catalyses Hydrolyzes single-stranded DNA or mismatched double-stranded DNA and polynucleotides, releasing free uracil.. Its function is as follows. Excises uracil residues from the DNA which can arise as a result of misincorporation of dUMP residues by DNA polymerase or due to deamination of cytosine. In Borrelia duttonii (strain Ly), this protein is Uracil-DNA glycosylase.